The chain runs to 1285 residues: ABC-type transporter fsqE (1285 aa).

Residues 54 to 343 (VSSICAVLAG…IAPSAQALLS (290 aa)) form the ABC transmembrane type-1 1 domain. Helical transmembrane passes span 57-77 (ICAVLAGALNPLVPVIYGLLV), 102-122 (LYYVYLSIGLFAFTYVATVGF), 176-196 (LAVMLTAIATFCAAFVVAFIM), 203-223 (IISPFFVIMIVTETLGGAYMV), 281-301 (VAGMIAWMNAMPNLIYALAFW), and 312-332 (MSVAEVSATTLAVTIGSFAII). One can recognise an ABC transporter 1 domain in the interval 380–622 (LDRVGLIYPS…NGAYAALVQK (243 aa)). Residue 413–420 (GSSGSGKS) coordinates ATP. Asparagine 467 is a glycosylation site (N-linked (GlcNAc...) asparagine). Residues 627–654 (DTHDHKAPDGARLSIEDDDDEDSRYGGN) are disordered. Transmembrane regions (helical) follow at residues 707–727 (LFGLANAILAGLTIPVQSVFF), 753–773 (GLYVMLTGTTFLFWMGVEIAL), 831–851 (GILTFLSTILAGIVLALAIGW), 855–875 (LVCTATIPIVVACGWLRLQVL), 931–951 (ILLASALYAASASVVYLCAAL), and 968–988 (FQVYICFVSLISGSQIAGSIF). The region spanning 713-996 (AILAGLTIPV…IFTYAPDASK (284 aa)) is the ABC transmembrane type-1 2 domain. N-linked (GlcNAc...) asparagine glycosylation occurs at asparagine 1037. One can recognise an ABC transporter 2 domain in the interval 1043-1281 (VEFEHVSFTY…RGKYWEMVSM (239 aa)). 1078-1085 (GQSGSGKS) is a binding site for ATP. Asparagine 1138 is a glycosylation site (N-linked (GlcNAc...) asparagine).

This sequence belongs to the ABC transporter superfamily. ABCB family. Multidrug resistance exporter (TC 3.A.1.201) subfamily.

It is found in the membrane. Its pathway is secondary metabolite biosynthesis. Its function is as follows. ABC-type transporter; part of the gene cluster that mediates the biosynthesis of the isoquinoline alkaloids fumisoquin A, fumisoquin B and fumisoquin C; as well as small amounts of fumipyrrole as a shunt metabolite. The products of the cluster lead to a brown coloration and are important for growth and conidiation. FsqE possibly plays a role of self-protection. The protein is ABC-type transporter fsqE of Aspergillus fumigatus (strain ATCC MYA-4609 / CBS 101355 / FGSC A1100 / Af293) (Neosartorya fumigata).